Consider the following 370-residue polypeptide: tRNA-specific 2-thiouridylase MnmA (370 aa).

ATP is bound by residues 12–19 and Met38; that span reads GLSGGVDS. The interval 98-100 is interaction with target base in tRNA; the sequence is NPD. Residue Cys103 is the Nucleophile of the active site. Cys103 and Cys201 are oxidised to a cystine. ATP is bound at residue Gly127. The interaction with tRNA stretch occupies residues 151 to 153; it reads KDQ. The Cysteine persulfide intermediate role is filled by Cys201. Residues 319–320 form an interaction with tRNA region; the sequence is RY.

The protein belongs to the MnmA/TRMU family.

It is found in the cytoplasm. It catalyses the reaction S-sulfanyl-L-cysteinyl-[protein] + uridine(34) in tRNA + AH2 + ATP = 2-thiouridine(34) in tRNA + L-cysteinyl-[protein] + A + AMP + diphosphate + H(+). Functionally, catalyzes the 2-thiolation of uridine at the wobble position (U34) of tRNA, leading to the formation of s(2)U34. This chain is tRNA-specific 2-thiouridylase MnmA, found in Verminephrobacter eiseniae (strain EF01-2).